We begin with the raw amino-acid sequence, 489 residues long: MESQSPIESIVFTDSCHPSQQENKFVQLISDQKIAIVPKFTLECGDILYDVPVAFKTWGTLNKEGNNCLLLCHALSGSADAGDWWGPLLGPGRAFDPSHFFIVCLNSLGSPYGSASPVTWNAETHSVYGPEFPLATIRDDVNIHKLILQRLGVKQIAMAVGGSMGGMLVLEWAFDKEFVRSIVPISTSLRHSAWCISWSEAQRQSIYSDPKFNDGYYGIDDQPVSGLGAARMSALLTYRSKCSFERRFARTVPDASRHPYPDRLPTPLTPSNAHWVVHNEGNRNRRERPCRSNGSSPTSESALNSPASSVSSLPSLGASQTTDSSSLNQSSLLRRPANTYFSAQSYLRYQAKKFVSRFDANCYISITKKLDTHDITRGRGSDSPKEVMKDLSLPVLVLGIESDGLFTFDEQVEIAKSFPNATLEKIISAEGHDGFLLEFTQVNSHIQKFQKEHLIDIMSQTNSFERLDSQVNDTNRESVFGEMEDITSW.

An AB hydrolase-1 domain is found at 69–438 (LLLCHALSGS…AEGHDGFLLE (370 aa)). The Nucleophile role is filled by Ser-163. The tract at residues 255-329 (ASRHPYPDRL…QTTDSSSLNQ (75 aa)) is disordered. Residues 280 to 290 (EGNRNRRERPC) are compositionally biased toward basic and acidic residues. Over residues 299 to 329 (SESALNSPASSVSSLPSLGASQTTDSSSLNQ) the composition is skewed to low complexity. Residues Asp-403 and His-432 contribute to the active site.

Belongs to the AB hydrolase superfamily. MetX family.

It is found in the cytoplasm. It catalyses the reaction L-homoserine + acetyl-CoA = O-acetyl-L-homoserine + CoA. Its pathway is amino-acid biosynthesis; L-methionine biosynthesis via de novo pathway; O-acetyl-L-homoserine from L-homoserine: step 1/1. Commits homoserine to the methionine biosynthesis pathway by catalyzing its O-acetylation. In Schizosaccharomyces pombe (strain 972 / ATCC 24843) (Fission yeast), this protein is Homoserine O-acetyltransferase (met6).